Consider the following 118-residue polypeptide: Ribosome-binding factor A (118 aa).

This sequence belongs to the RbfA family. As to quaternary structure, monomer. Binds 30S ribosomal subunits, but not 50S ribosomal subunits or 70S ribosomes.

Its subcellular location is the cytoplasm. Its function is as follows. One of several proteins that assist in the late maturation steps of the functional core of the 30S ribosomal subunit. Associates with free 30S ribosomal subunits (but not with 30S subunits that are part of 70S ribosomes or polysomes). Required for efficient processing of 16S rRNA. May interact with the 5'-terminal helix region of 16S rRNA. The polypeptide is Ribosome-binding factor A (Thermodesulfovibrio yellowstonii (strain ATCC 51303 / DSM 11347 / YP87)).